The sequence spans 26 residues: SKCRIGKDGFYSVTCTEKENLCFTQF.

A disulfide bridge links Cys3 with Cys22.

The protein belongs to the three-finger toxin family. Short-chain subfamily. Expressed by the venom gland.

It localises to the secreted. Its function is as follows. Binds and may inhibit nicotinic acetylcholine receptors (nAChR). In Micrurus nigrocinctus (Central American coral snake), this protein is Nicotinic acetylcholine receptor-binding protein Mnn-1A.